A 98-amino-acid polypeptide reads, in one-letter code: Large ribosomal subunit protein uL23 (98 aa).

It belongs to the universal ribosomal protein uL23 family. Part of the 50S ribosomal subunit. Contacts protein L29, and trigger factor when it is bound to the ribosome.

Functionally, one of the early assembly proteins it binds 23S rRNA. One of the proteins that surrounds the polypeptide exit tunnel on the outside of the ribosome. Forms the main docking site for trigger factor binding to the ribosome. This is Large ribosomal subunit protein uL23 from Rickettsia canadensis (strain McKiel).